A 323-amino-acid chain; its full sequence is tRNA(Ile)-lysidine synthase (323 aa).

Position 33–38 (33–38) interacts with ATP; the sequence is SGGPDS.

Belongs to the tRNA(Ile)-lysidine synthase family.

It localises to the cytoplasm. The catalysed reaction is cytidine(34) in tRNA(Ile2) + L-lysine + ATP = lysidine(34) in tRNA(Ile2) + AMP + diphosphate + H(+). Functionally, ligates lysine onto the cytidine present at position 34 of the AUA codon-specific tRNA(Ile) that contains the anticodon CAU, in an ATP-dependent manner. Cytidine is converted to lysidine, thus changing the amino acid specificity of the tRNA from methionine to isoleucine. This is tRNA(Ile)-lysidine synthase from Mycobacterium bovis (strain ATCC BAA-935 / AF2122/97).